The chain runs to 138 residues: uncharacterized protein (138 aa).

This is an uncharacterized protein from Homo sapiens (Human).